The sequence spans 310 residues: Malate dehydrogenase (310 aa).

Residues 7–12 (GAGNVG) and Asp32 contribute to the NAD(+) site. Substrate is bound by residues Arg81 and Arg87. NAD(+)-binding positions include Asn94 and 117 to 119 (VSN). Asn119 and Arg150 together coordinate substrate. Residue His174 is the Proton acceptor of the active site.

This sequence belongs to the LDH/MDH superfamily. MDH type 3 family.

It carries out the reaction (S)-malate + NAD(+) = oxaloacetate + NADH + H(+). Catalyzes the reversible oxidation of malate to oxaloacetate. This Chlorobium luteolum (strain DSM 273 / BCRC 81028 / 2530) (Pelodictyon luteolum) protein is Malate dehydrogenase.